Reading from the N-terminus, the 653-residue chain is Rab11 family-interacting protein 5 (653 aa).

The C2 domain occupies 5 to 146 (RGAEPAAGPS…AGRAQHTQWY (142 aa)). Ser-176, Ser-283, Ser-286, Ser-307, Ser-357, and Ser-367 each carry phosphoserine. The tract at residues 269 to 300 (GPGAELLTRSPSRSSWLSTEGGRDSAQSPKLF) is disordered. Over residues 277-286 (RSPSRSSWLS) the composition is skewed to polar residues. Disordered stretches follow at residues 342-402 (HIYN…AVLG) and 415-548 (PGAS…RSSL). Over residues 357 to 368 (SISGSLPSSGSL) the composition is skewed to low complexity. Basic and acidic residues predominate over residues 375–387 (FSEEGPRSTDDTW). Phosphoserine occurs at positions 391 and 395. Basic and acidic residues-rich tracts occupy residues 420 to 430 (PGEEEGARLPE) and 447 to 460 (VAEKEGARKEERKP). Phosphoserine occurs at positions 494, 538, 547, and 553. One can recognise an FIP-RBD domain in the interval 586 to 648 (KDSAVLDQSA…ETSPTLLQIP (63 aa)).

In terms of assembly, interacts with RAB11FIP4. Interacts with NAPG. Interacts with RO60. Interacts with RAB11A that has been activated by GTP binding. As to quaternary structure, (Microbial infection) Interacts with Kaposi's sarcoma-associated herpesvirus/HHV-8 protein ORF45; this interaction results in the lysosomal degradation of ORF45 and the inhibition of viral particle release. Post-translationally, phosphorylated on serine and threonine residues. Phosphorylation at Ser-357 is PKA-dependent. In terms of tissue distribution, detected at low levels in heart, brain, placenta, lung, liver, adipocytes, kidney, spleen, skeletal muscle and pancreas.

The protein localises to the cytoplasm. It is found in the recycling endosome membrane. Its subcellular location is the early endosome membrane. The protein resides in the golgi apparatus membrane. It localises to the cytoplasmic vesicle. The protein localises to the secretory vesicle membrane. It is found in the mitochondrion membrane. In terms of biological role, rab effector involved in protein trafficking from apical recycling endosomes to the apical plasma membrane. Involved in insulin granule exocytosis. May regulate V-ATPase intracellular transport in response to extracellular acidosis. This Homo sapiens (Human) protein is Rab11 family-interacting protein 5.